The chain runs to 20 residues: Peptide encoded by miPEP171b (20 aa).

In terms of tissue distribution, lateral root initiations.

In terms of biological role, regulatory peptide encoded by the primary transcript (pri-miR171b) of the microRNA miR171b that enhances the accumulation of its corresponding mature miRNA. Acts probably as a transcriptional activator of its corresponding pri-miRNA. Has no effect on the accumulation of other miRNAs. Addition of synthetic miPEP171b increases the abundance of miR171b, with consequent reduction of lateral root formation. In Medicago truncatula (Barrel medic), this protein is Peptide encoded by miPEP171b.